The primary structure comprises 366 residues: Protein-glutamate methylesterase/protein-glutamine glutaminase (366 aa).

The 119-residue stretch at 5–123 (RVLVVDDSVV…SVGRSMEQVR (119 aa)) folds into the Response regulatory domain. 4-aspartylphosphate is present on Asp56. Residues 163-355 (PLGGHRLLVI…PEILRRLARQ (193 aa)) form the CheB-type methylesterase domain. Active-site residues include Ser175, His201, and Asp297.

The protein belongs to the CheB family. Post-translationally, phosphorylated by CheA. Phosphorylation of the N-terminal regulatory domain activates the methylesterase activity.

The protein resides in the cytoplasm. The catalysed reaction is [protein]-L-glutamate 5-O-methyl ester + H2O = L-glutamyl-[protein] + methanol + H(+). It carries out the reaction L-glutaminyl-[protein] + H2O = L-glutamyl-[protein] + NH4(+). Functionally, involved in chemotaxis. Part of a chemotaxis signal transduction system that modulates chemotaxis in response to various stimuli. Catalyzes the demethylation of specific methylglutamate residues introduced into the chemoreceptors (methyl-accepting chemotaxis proteins or MCP) by CheR. Also mediates the irreversible deamidation of specific glutamine residues to glutamic acid. This Nocardioides sp. (strain ATCC BAA-499 / JS614) protein is Protein-glutamate methylesterase/protein-glutamine glutaminase.